The chain runs to 105 residues: Sulfite reductase, dissimilatory-type subunit gamma (105 aa).

Belongs to the DsrC/TusE family. As to quaternary structure, heterohexamer of two alpha, two beta and two gamma subunits.

It is found in the cytoplasm. It catalyses the reaction [DsrC protein]-trisulfide + NAD(+) + 3 H2O = [DsrC protein]-dithiol + sulfite + NADH + 3 H(+). Catalyzes the reduction of sulfite to sulfide. This is the terminal oxidation reaction in sulfate respiration, a process catalyzed by the sulfate-reducing bacteria. The sequence is that of Sulfite reductase, dissimilatory-type subunit gamma (dsvC) from Nitratidesulfovibrio vulgaris (strain ATCC 29579 / DSM 644 / CCUG 34227 / NCIMB 8303 / VKM B-1760 / Hildenborough) (Desulfovibrio vulgaris).